The sequence spans 462 residues: tRNA-2-methylthio-N(6)-dimethylallyladenosine synthase (462 aa).

The region spanning 28 to 144 is the MTTase N-terminal domain; that stretch reads KKLFVKTYGC…LPKMMEAVNA (117 aa). 6 residues coordinate [4Fe-4S] cluster: Cys-37, Cys-73, Cys-107, Cys-181, Cys-185, and Cys-188. The 232-residue stretch at 167 to 398 folds into the Radical SAM core domain; the sequence is ATRGPTAFLT…QALLTQQQRA (232 aa). The TRAM domain maps to 401 to 462; that stretch reads DAMVGRRVKV…KTNSLTGRLV (62 aa).

It belongs to the methylthiotransferase family. MiaB subfamily. In terms of assembly, monomer. [4Fe-4S] cluster serves as cofactor.

It is found in the cytoplasm. It carries out the reaction N(6)-dimethylallyladenosine(37) in tRNA + (sulfur carrier)-SH + AH2 + 2 S-adenosyl-L-methionine = 2-methylsulfanyl-N(6)-dimethylallyladenosine(37) in tRNA + (sulfur carrier)-H + 5'-deoxyadenosine + L-methionine + A + S-adenosyl-L-homocysteine + 2 H(+). Functionally, catalyzes the methylthiolation of N6-(dimethylallyl)adenosine (i(6)A), leading to the formation of 2-methylthio-N6-(dimethylallyl)adenosine (ms(2)i(6)A) at position 37 in tRNAs that read codons beginning with uridine. In Jannaschia sp. (strain CCS1), this protein is tRNA-2-methylthio-N(6)-dimethylallyladenosine synthase.